The sequence spans 482 residues: Glutamate synthase [NADPH] small chain (482 aa).

A 4Fe-4S ferredoxin-type domain is found at 39-72 (ERANEQANRCSQCGVPFCQVHCPVSNNIPDWLKL). [4Fe-4S] cluster is bound by residues cysteine 95, cysteine 99, cysteine 105, and cysteine 109.

Aggregate of 4 catalytic active heterodimers, consisting of a large and a small subunit. It depends on [4Fe-4S] cluster as a cofactor.

It catalyses the reaction 2 L-glutamate + NADP(+) = L-glutamine + 2-oxoglutarate + NADPH + H(+). Its pathway is amino-acid biosynthesis; L-glutamate biosynthesis via GLT pathway; L-glutamate from 2-oxoglutarate and L-glutamine (NADP(+) route): step 1/1. It functions in the pathway energy metabolism; nitrogen metabolism. This Azospirillum brasilense protein is Glutamate synthase [NADPH] small chain (gltD).